The sequence spans 611 residues: tRNA uridine 5-carboxymethylaminomethyl modification enzyme MnmG (611 aa).

Residues 8–13 (GAGHAG), Val-120, and Ser-175 contribute to the FAD site. Residue 268–282 (GPRYCPSIEDKIVRF) coordinates NAD(+). Gln-365 is an FAD binding site.

Belongs to the MnmG family. Homodimer. Heterotetramer of two MnmE and two MnmG subunits. The cofactor is FAD.

The protein localises to the cytoplasm. Its function is as follows. NAD-binding protein involved in the addition of a carboxymethylaminomethyl (cmnm) group at the wobble position (U34) of certain tRNAs, forming tRNA-cmnm(5)s(2)U34. The chain is tRNA uridine 5-carboxymethylaminomethyl modification enzyme MnmG from Mycoplasmoides gallisepticum (strain R(low / passage 15 / clone 2)) (Mycoplasma gallisepticum).